We begin with the raw amino-acid sequence, 122 residues long: Small ribosomal subunit protein uS13 (122 aa).

The tract at residues 93–122 (RRGLPVRGQKTKTNARTRKGPKKTIANKKK) is disordered.

This sequence belongs to the universal ribosomal protein uS13 family. As to quaternary structure, part of the 30S ribosomal subunit. Forms a loose heterodimer with protein S19. Forms two bridges to the 50S subunit in the 70S ribosome.

In terms of biological role, located at the top of the head of the 30S subunit, it contacts several helices of the 16S rRNA. In the 70S ribosome it contacts the 23S rRNA (bridge B1a) and protein L5 of the 50S subunit (bridge B1b), connecting the 2 subunits; these bridges are implicated in subunit movement. Contacts the tRNAs in the A and P-sites. The protein is Small ribosomal subunit protein uS13 of Clostridium beijerinckii (strain ATCC 51743 / NCIMB 8052) (Clostridium acetobutylicum).